A 136-amino-acid polypeptide reads, in one-letter code: Large ribosomal subunit protein uL13 (136 aa).

It belongs to the universal ribosomal protein uL13 family. As to quaternary structure, part of the 50S ribosomal subunit.

Functionally, this protein is one of the early assembly proteins of the 50S ribosomal subunit, although it is not seen to bind rRNA by itself. It is important during the early stages of 50S assembly. The chain is Large ribosomal subunit protein uL13 from Thermoplasma volcanium (strain ATCC 51530 / DSM 4299 / JCM 9571 / NBRC 15438 / GSS1).